Here is a 172-residue protein sequence, read N- to C-terminus: Adenine phosphoribosyltransferase (172 aa).

The protein belongs to the purine/pyrimidine phosphoribosyltransferase family. Homodimer.

It is found in the cytoplasm. The catalysed reaction is AMP + diphosphate = 5-phospho-alpha-D-ribose 1-diphosphate + adenine. The protein operates within purine metabolism; AMP biosynthesis via salvage pathway; AMP from adenine: step 1/1. Functionally, catalyzes a salvage reaction resulting in the formation of AMP, that is energically less costly than de novo synthesis. The sequence is that of Adenine phosphoribosyltransferase from Rippkaea orientalis (strain PCC 8801 / RF-1) (Cyanothece sp. (strain PCC 8801)).